The sequence spans 237 residues: Demethylmenaquinone methyltransferase (237 aa).

Residues threonine 58, aspartate 79, and asparagine 106–alanine 107 each bind S-adenosyl-L-methionine.

The protein belongs to the class I-like SAM-binding methyltransferase superfamily. MenG/UbiE family.

It carries out the reaction a 2-demethylmenaquinol + S-adenosyl-L-methionine = a menaquinol + S-adenosyl-L-homocysteine + H(+). Its pathway is quinol/quinone metabolism; menaquinone biosynthesis; menaquinol from 1,4-dihydroxy-2-naphthoate: step 2/2. In terms of biological role, methyltransferase required for the conversion of demethylmenaquinol (DMKH2) to menaquinol (MKH2). This is Demethylmenaquinone methyltransferase from Bacillus cytotoxicus (strain DSM 22905 / CIP 110041 / 391-98 / NVH 391-98).